A 295-amino-acid polypeptide reads, in one-letter code: Malonyl-[acyl-carrier protein] O-methyltransferase (295 aa).

The protein belongs to the methyltransferase superfamily.

It carries out the reaction malonyl-[ACP] + S-adenosyl-L-methionine = malonyl-[ACP] methyl ester + S-adenosyl-L-homocysteine. Its pathway is cofactor biosynthesis; biotin biosynthesis. Converts the free carboxyl group of a malonyl-thioester to its methyl ester by transfer of a methyl group from S-adenosyl-L-methionine (SAM). It allows to synthesize pimeloyl-ACP via the fatty acid synthetic pathway. The sequence is that of Malonyl-[acyl-carrier protein] O-methyltransferase from Halorhodospira halophila (strain DSM 244 / SL1) (Ectothiorhodospira halophila (strain DSM 244 / SL1)).